A 650-amino-acid polypeptide reads, in one-letter code: Probable potassium transport system protein Kup 1 (650 aa).

12 consecutive transmembrane segments (helical) span residues 12 to 32 (GLLI…LYVM), 54 to 74 (ISLV…IIAL), 97 to 117 (WLVL…TLTP), 139 to 159 (VSSQ…LFSI), 170 to 190 (AFGP…LINM), 216 to 236 (AGIF…ALYS), 249 to 269 (SWPF…VWIL), 295 to 315 (LAAI…LITG), 344 to 364 (IYIP…VLYF), 375 to 395 (GLSI…WLAM), 400 to 420 (PVWN…FMIS), and 428 to 448 (GGYV…VWYY).

Belongs to the HAK/KUP transporter (TC 2.A.72) family.

The protein localises to the cell membrane. The catalysed reaction is K(+)(in) + H(+)(in) = K(+)(out) + H(+)(out). Its function is as follows. Transport of potassium into the cell. Likely operates as a K(+):H(+) symporter. This chain is Probable potassium transport system protein Kup 1, found in Lactobacillus acidophilus (strain ATCC 700396 / NCK56 / N2 / NCFM).